Consider the following 251-residue polypeptide: Gamma-glutamyl peptidase 4 (251 aa).

The Glutamine amidotransferase type-1 domain occupies 16-213 (SEFAKKTYGG…IDRVLAGGHI (198 aa)). The Nucleophile role is filled by Cys100. Active-site residues include His192 and Glu194.

Belongs to the peptidase C26 family.

It localises to the cytoplasm. It is found in the cytosol. It functions in the pathway secondary metabolite biosynthesis. In terms of biological role, involved in glucosinolate biosynthesis. Hydrolyzes the gamma-glutamyl peptide bond of several glutathione (GSH) conjugates to produce Cys-Gly conjugates related to glucosinolates. The gamma-Glu-Cys-Gly-GSH conjugates are the sulfur-donating molecule in glucosinolate biosynthesis. The protein is Gamma-glutamyl peptidase 4 of Arabidopsis thaliana (Mouse-ear cress).